We begin with the raw amino-acid sequence, 344 residues long: Anthranilate phosphoribosyltransferase (344 aa).

5-phospho-alpha-D-ribose 1-diphosphate-binding positions include glycine 83, 86-87, threonine 91, 93-96, 111-119, and serine 123; these read GD, NIST, and KHGGRSVSS. Glycine 83 serves as a coordination point for anthranilate. Serine 95 is a Mg(2+) binding site. Arginine 169 contacts anthranilate. Residues aspartate 228 and glutamate 229 each coordinate Mg(2+).

Belongs to the anthranilate phosphoribosyltransferase family. In terms of assembly, homodimer. Mg(2+) serves as cofactor.

It carries out the reaction N-(5-phospho-beta-D-ribosyl)anthranilate + diphosphate = 5-phospho-alpha-D-ribose 1-diphosphate + anthranilate. It participates in amino-acid biosynthesis; L-tryptophan biosynthesis; L-tryptophan from chorismate: step 2/5. Functionally, catalyzes the transfer of the phosphoribosyl group of 5-phosphorylribose-1-pyrophosphate (PRPP) to anthranilate to yield N-(5'-phosphoribosyl)-anthranilate (PRA). This is Anthranilate phosphoribosyltransferase from Methylibium petroleiphilum (strain ATCC BAA-1232 / LMG 22953 / PM1).